The following is a 145-amino-acid chain: MAKKITGYIRLQIKAGEANPSPPVGPALGQHGVNIREFCESFNTATKNIEKGLPTPVIITVYADRTFSFITKTPPASILLKKFVLKGKSGSARPNTEKVGKATRQQLEEIAKMKTPDLTAADLEAAIRTIAGTARSMGIDVEGVE.

It belongs to the universal ribosomal protein uL11 family. In terms of assembly, part of the ribosomal stalk of the 50S ribosomal subunit. Interacts with L10 and the large rRNA to form the base of the stalk. L10 forms an elongated spine to which L12 dimers bind in a sequential fashion forming a multimeric L10(L12)X complex. One or more lysine residues are methylated.

In terms of biological role, forms part of the ribosomal stalk which helps the ribosome interact with GTP-bound translation factors. The polypeptide is Large ribosomal subunit protein uL11 (Coxiella burnetii (strain Dugway 5J108-111)).